The chain runs to 837 residues: Phenylalanine--tRNA ligase beta subunit (837 aa).

Positions S39–G149 constitute a tRNA-binding domain. The B5 domain maps to I415–S520. Mg(2+) is bound by residues D498, D504, E507, and E508. In terms of domain architecture, FDX-ACB spans P743 to R836.

The protein belongs to the phenylalanyl-tRNA synthetase beta subunit family. Type 1 subfamily. In terms of assembly, tetramer of two alpha and two beta subunits. Mg(2+) serves as cofactor.

Its subcellular location is the cytoplasm. It carries out the reaction tRNA(Phe) + L-phenylalanine + ATP = L-phenylalanyl-tRNA(Phe) + AMP + diphosphate + H(+). The chain is Phenylalanine--tRNA ligase beta subunit from Prochlorococcus marinus (strain SARG / CCMP1375 / SS120).